The chain runs to 195 residues: ATP-dependent Clp protease proteolytic subunit 2 (195 aa).

Serine 92 functions as the Nucleophile in the catalytic mechanism. Histidine 117 is an active-site residue.

The protein belongs to the peptidase S14 family. In terms of assembly, fourteen ClpP subunits assemble into 2 heptameric rings which stack back to back to give a disk-like structure with a central cavity, resembling the structure of eukaryotic proteasomes.

It is found in the cytoplasm. The catalysed reaction is Hydrolysis of proteins to small peptides in the presence of ATP and magnesium. alpha-casein is the usual test substrate. In the absence of ATP, only oligopeptides shorter than five residues are hydrolyzed (such as succinyl-Leu-Tyr-|-NHMec, and Leu-Tyr-Leu-|-Tyr-Trp, in which cleavage of the -Tyr-|-Leu- and -Tyr-|-Trp bonds also occurs).. Functionally, cleaves peptides in various proteins in a process that requires ATP hydrolysis. Has a chymotrypsin-like activity. Plays a major role in the degradation of misfolded proteins. The sequence is that of ATP-dependent Clp protease proteolytic subunit 2 from Rhodococcus jostii (strain RHA1).